Consider the following 550-residue polypeptide: Arginine--tRNA ligase (550 aa).

Positions 130-140 match the 'HIGH' region motif; sequence ANPTGPIHLGG.

This sequence belongs to the class-I aminoacyl-tRNA synthetase family. In terms of assembly, monomer.

Its subcellular location is the cytoplasm. The enzyme catalyses tRNA(Arg) + L-arginine + ATP = L-arginyl-tRNA(Arg) + AMP + diphosphate. The polypeptide is Arginine--tRNA ligase (Corynebacterium glutamicum (strain R)).